A 434-amino-acid chain; its full sequence is [Pyruvate dehydrogenase (acetyl-transferring)] kinase isozyme 1, mitochondrial (434 aa).

The transit peptide at 1–26 directs the protein to the mitochondrion; that stretch reads MRLARLLRGGTSVRPLCAVPCASRSL. At Tyr-136 the chain carries Phosphotyrosine; by FGFR1. One can recognise a Histidine kinase domain in the interval 161–391; it reads TEYKESFGVD…DAVIYIKALS (231 aa). Tyr-241 is subject to Phosphotyrosine; by FGFR1, ABL1, FLT3 and JAK2. Tyr-242 is subject to Phosphotyrosine; by FGFR1. Residues 277–284, Asp-316, 335–336, and 352–357 each bind ATP; these read ELFKNAMR, ST, and GFGYGL. At Thr-336 the chain carries Phosphothreonine. Lys-403 is subject to N6-succinyllysine.

This sequence belongs to the PDK/BCKDK protein kinase family. As to quaternary structure, homodimer, and heterodimer with PDK2. Interacts with the pyruvate dehydrogenase complex subunit DLAT, and is part of the multimeric pyruvate dehydrogenase complex that contains multiple copies of pyruvate dehydrogenase (E1), dihydrolipoamide acetyltransferase (DLAT, E2) and lipoamide dehydrogenase (DLD, E3). Interacts with phosphoglycerate kinase PGK1; the interaction is direct, occurs under hypoxic conditions and leads to PDK1-mediated inhibition of pyruvate dehydrogenase complex activity. Post-translationally, phosphorylated by constitutively activated ABL1, FGFR1, FLT3 and JAK2 (in vitro), and this may also occur in cancer cells that express constitutively activated ABL1, FGFR1, FLT3 and JAK2. Phosphorylation at Tyr-241 and Tyr-242 strongly increases kinase activity, while phosphorylation at Tyr-136 has a lesser effect. Phosphorylated under hypoxic conditions at Thr-336 by phosphoglycerate kinase PGK1 which has an activating effect. As to expression, detected in pancreas islets (at protein level). Expressed predominantly in the heart.

It is found in the mitochondrion matrix. The enzyme catalyses L-seryl-[pyruvate dehydrogenase E1 alpha subunit] + ATP = O-phospho-L-seryl-[pyruvate dehydrogenase E1 alpha subunit] + ADP + H(+). With respect to regulation, activated by binding to the pyruvate dehydrogenase complex subunit DLAT. Strongly activated by NADH plus acetyl-coenzyme A. Inhibited by dichloroacetate. Functionally, kinase that plays a key role in regulation of glucose and fatty acid metabolism and homeostasis via phosphorylation of the pyruvate dehydrogenase subunits PDHA1 and PDHA2. This inhibits pyruvate dehydrogenase activity, and thereby regulates metabolite flux through the tricarboxylic acid cycle, down-regulates aerobic respiration and inhibits the formation of acetyl-coenzyme A from pyruvate. Plays an important role in cellular responses to hypoxia and is important for cell proliferation under hypoxia. The sequence is that of [Pyruvate dehydrogenase (acetyl-transferring)] kinase isozyme 1, mitochondrial (Pdk1) from Rattus norvegicus (Rat).